Here is a 292-residue protein sequence, read N- to C-terminus: G1/S-specific cyclin-D3 (292 aa).

In terms of domain architecture, Cyclin N-terminal spans 27-152 (VLQSLLRLEE…LVLGKLKWDL (126 aa)). The disordered stretch occupies residues 254–292 (SLREASQTSSSPAPKAPRGSSSQGPSQTSTPTDVTAIHL). Phosphoserine occurs at positions 264 and 279. Positions 272-285 (GSSSQGPSQTSTPT) are enriched in low complexity. Thr283 carries the phosphothreonine modification.

This sequence belongs to the cyclin family. Cyclin D subfamily. As to quaternary structure, interacts with the CDK4 and CDK6 protein kinases to form a serine/threonine kinase holoenzyme complex. The cyclin subunit imparts substrate specificity to the complex. Interacts with ATF5. Interacts with EIF3K. Component of the ternary complex cyclin D/CDK4/CDKN1B required for nuclear translocation and modulation of CDK4-mediated kinase activity. Can form similar complexes with either CDKN1A or CDKN2A. Phosphorylation at Thr-283 by MAP kinases is required for ubiquitination and degradation by the DCX(AMBRA1) complex. Post-translationally, ubiquitinated by the DCX(AMBRA1) complex during the transition from G1 to S cell phase, leading to its degradation: ubiquitination is dependent on Thr-283 phosphorylation. The DCX(AMBRA1) complex represents the major regulator of CCND3 stability during the G1/S transition. Polyubiquitinated by the SCF(FBXL2) complex, leading to proteasomal degradation.

It localises to the nucleus. The protein localises to the cytoplasm. Regulatory component of the cyclin D3-CDK4 (DC) complex that phosphorylates and inhibits members of the retinoblastoma (RB) protein family including RB1 and regulates the cell-cycle during G(1)/S transition. Phosphorylation of RB1 allows dissociation of the transcription factor E2F from the RB/E2F complex and the subsequent transcription of E2F target genes which are responsible for the progression through the G(1) phase. Hypophosphorylates RB1 in early G(1) phase. Cyclin D-CDK4 complexes are major integrators of various mitogenenic and antimitogenic signals. Component of the ternary complex, cyclin D3/CDK4/CDKN1B, required for nuclear translocation and activity of the cyclin D-CDK4 complex. Shows transcriptional coactivator activity with ATF5 independently of CDK4. The sequence is that of G1/S-specific cyclin-D3 from Homo sapiens (Human).